Reading from the N-terminus, the 459-residue chain is Ribulose bisphosphate carboxylase large chain (459 aa).

At K4 the chain carries N6,N6,N6-trimethyllysine. Substrate-binding residues include N113 and T163. K165 (proton acceptor) is an active-site residue. K167 is a binding site for substrate. 3 residues coordinate Mg(2+): K191, D193, and E194. K191 carries the post-translational modification N6-carboxylysine. H284 (proton acceptor) is an active-site residue. Positions 285, 317, and 369 each coordinate substrate.

It belongs to the RuBisCO large chain family. Type I subfamily. In terms of assembly, heterohexadecamer of 8 large chains and 8 small chains; disulfide-linked. The disulfide link is formed within the large subunit homodimers. Mg(2+) is required as a cofactor. The disulfide bond which can form in the large chain dimeric partners within the hexadecamer appears to be associated with oxidative stress and protein turnover.

It is found in the plastid. It localises to the chloroplast. The enzyme catalyses 2 (2R)-3-phosphoglycerate + 2 H(+) = D-ribulose 1,5-bisphosphate + CO2 + H2O. It carries out the reaction D-ribulose 1,5-bisphosphate + O2 = 2-phosphoglycolate + (2R)-3-phosphoglycerate + 2 H(+). Functionally, ruBisCO catalyzes two reactions: the carboxylation of D-ribulose 1,5-bisphosphate, the primary event in carbon dioxide fixation, as well as the oxidative fragmentation of the pentose substrate in the photorespiration process. Both reactions occur simultaneously and in competition at the same active site. The polypeptide is Ribulose bisphosphate carboxylase large chain (Nyssa ogeche (Ogeechee tupelo)).